The sequence spans 394 residues: Probable peptidoglycan glycosyltransferase FtsW (394 aa).

The Cytoplasmic portion of the chain corresponds to 1–27; the sequence is MEFLQNIKKNYDEWTRITPQGLLYDRA. The helical transmembrane segment at 28–48 threads the bilayer; the sequence is LFWLFVILLLIGLVAVTSASI. Residues 49–66 lie on the Periplasmic side of the membrane; the sequence is PYSSRLFNDPFYFAKRDA. Residues 67-87 traverse the membrane as a helical segment; the sequence is IYVLLSLLTCYISLQISSSQW. The Cytoplasmic portion of the chain corresponds to 88 to 93; sequence EKWHAK. Residues 94–114 traverse the membrane as a helical segment; it reads IFLFSVILLLLVPFIGTSVNG. Over 115–120 the chain is Periplasmic; it reads AKRWIS. Residues 121 to 141 form a helical membrane-spanning segment; that stretch reads LGILNFQPAEFAKLALTCFLA. At 142 to 155 the chain is on the cytoplasmic side; the sequence is SYFTRRYDEVRSRH. The next 2 helical transmembrane spans lie at 156–176 and 177–197; these read VSIFKPFIVMLVLGCFLLLQP and DLGSTVVLFIIMSGMLFIVGA. Residue K198 is a topological domain, cytoplasmic. A helical membrane pass occupies residues 199-219; the sequence is ILQFVGLIALGGILFVWLVLT. The Periplasmic segment spans residues 220 to 277; sequence ASYRLKRFIGFLEPFKEPYGTGFQLTNSLIAFGRGEITGEGLGNSIQKLDYLPEAHTD. Residues 278–298 traverse the membrane as a helical segment; that stretch reads FIMAIIGEEFGFIGILIVILL. Residues 299 to 322 are Cytoplasmic-facing; that stretch reads LGLLIFRAMKIGRESLMLEQRFRG. A helical transmembrane segment spans residues 323-343; it reads FFALGIGFWIFFQGFVNLGMA. Over 344–353 the chain is Periplasmic; sequence LGMLPTKGLT. Residues 354–374 form a helical membrane-spanning segment; that stretch reads FPLVSYGGSSIIIMSATIGIL. The Cytoplasmic portion of the chain corresponds to 375–394; that stretch reads LRIDHENRLFRIGQARLRDD.

It belongs to the SEDS family. FtsW subfamily.

Its subcellular location is the cell inner membrane. It carries out the reaction [GlcNAc-(1-&gt;4)-Mur2Ac(oyl-L-Ala-gamma-D-Glu-L-Lys-D-Ala-D-Ala)](n)-di-trans,octa-cis-undecaprenyl diphosphate + beta-D-GlcNAc-(1-&gt;4)-Mur2Ac(oyl-L-Ala-gamma-D-Glu-L-Lys-D-Ala-D-Ala)-di-trans,octa-cis-undecaprenyl diphosphate = [GlcNAc-(1-&gt;4)-Mur2Ac(oyl-L-Ala-gamma-D-Glu-L-Lys-D-Ala-D-Ala)](n+1)-di-trans,octa-cis-undecaprenyl diphosphate + di-trans,octa-cis-undecaprenyl diphosphate + H(+). Its pathway is cell wall biogenesis; peptidoglycan biosynthesis. Peptidoglycan polymerase that is essential for cell division. The sequence is that of Probable peptidoglycan glycosyltransferase FtsW from Haemophilus influenzae (strain ATCC 51907 / DSM 11121 / KW20 / Rd).